A 376-amino-acid chain; its full sequence is tRNA-specific 2-thiouridylase MnmA (376 aa).

ATP is bound by residues 19–26 (GMSGGVDS) and Met-45. The interaction with target base in tRNA stretch occupies residues 105–107 (NPD). The active-site Nucleophile is the Cys-110. A disulfide bridge links Cys-110 with Cys-210. Gly-134 contacts ATP. The tract at residues 160–162 (KDQ) is interaction with tRNA. The active-site Cysteine persulfide intermediate is Cys-210. The tract at residues 326–327 (RY) is interaction with tRNA.

Belongs to the MnmA/TRMU family.

It is found in the cytoplasm. It catalyses the reaction S-sulfanyl-L-cysteinyl-[protein] + uridine(34) in tRNA + AH2 + ATP = 2-thiouridine(34) in tRNA + L-cysteinyl-[protein] + A + AMP + diphosphate + H(+). In terms of biological role, catalyzes the 2-thiolation of uridine at the wobble position (U34) of tRNA, leading to the formation of s(2)U34. In Bordetella petrii (strain ATCC BAA-461 / DSM 12804 / CCUG 43448), this protein is tRNA-specific 2-thiouridylase MnmA.